The following is a 608-amino-acid chain: Probable cytosolic Fe-S cluster assembly factor SPAC806.02c (608 aa).

An ATP-binding site is contributed by 13-20; it reads GKGGVGKS. Residues C201 and C204 each coordinate [4Fe-4S] cluster. WD repeat units lie at residues 288 to 327, 331 to 371, 376 to 415, 421 to 460, 465 to 504, 529 to 567, and 576 to 608; these read GHTG…LVHV, FHTR…WECT, GHEN…EFDC, EHTQ…WALT, GHTN…EDVA, IHKG…EALW, and AHGV…WSFK.

It in the N-terminal section; belongs to the Mrp/NBP35 ATP-binding proteins family. NUBP2/CFD1 subfamily. This sequence in the C-terminal section; belongs to the WD repeat CIA1 family. As to quaternary structure, heterotetramer of 2 nbp35 and 2 SPAC806.02c chains. The cofactor is [4Fe-4S] cluster.

The protein resides in the cytoplasm. It localises to the nucleus. Fusion protein of two essential components of the cytosolic iron-sulfur (Fe/S) protein assembly (CIA) machinery. Required for maturation of extramitochondrial Fe-S proteins. May form a heterotetramer with nubp35, functioning as a Fe-S scaffold complex, mediating the de novo assembly of an Fe-S cluster and its transfer to target apoproteins. This Schizosaccharomyces pombe (strain 972 / ATCC 24843) (Fission yeast) protein is Probable cytosolic Fe-S cluster assembly factor SPAC806.02c.